The following is a 305-amino-acid chain: uncharacterized protein (305 aa).

A disordered region spans residues 255-305; that stretch reads RCHRAGLRSPPRTREPLWSLGPSGGEAAGEAPGGKGPPTPVLPHARRAGAA. Positions 276–288 are enriched in gly residues; sequence PSGGEAAGEAPGG.

This is an uncharacterized protein from Streptomyces fradiae (Streptomyces roseoflavus).